A 626-amino-acid chain; its full sequence is Chaperone protein HtpG (626 aa).

Residues 1-341 form an a; substrate-binding region; that stretch reads MAKKEFKAES…SEDLSLNISR (341 aa). The tract at residues 342-552 is b; it reads EMLQHDRQLK…DGEVTIEMEK (211 aa). The c stretch occupies residues 553–626; that stretch reads ILNAMPDSQN…FTNNICKVMV (74 aa).

Belongs to the heat shock protein 90 family. As to quaternary structure, homodimer.

The protein resides in the cytoplasm. Functionally, molecular chaperone. Has ATPase activity. In Bacillus subtilis (strain 168), this protein is Chaperone protein HtpG.